The primary structure comprises 56 residues: Small ribosomal subunit protein uS14 (56 aa).

At S9 the chain carries Phosphoserine. R12 bears the Omega-N-methylarginine mark. Zn(2+)-binding residues include C21, C24, C39, and C42. Residue K48 is modified to N6-acetyllysine.

Belongs to the universal ribosomal protein uS14 family. In terms of assembly, component of the 40S small ribosomal subunit. Requires Zn(2+) as cofactor.

It is found in the cytoplasm. Its subcellular location is the cytosol. The protein localises to the rough endoplasmic reticulum. Its function is as follows. Component of the small ribosomal subunit. The ribosome is a large ribonucleoprotein complex responsible for the synthesis of proteins in the cell. This chain is Small ribosomal subunit protein uS14 (RPS29), found in Sus scrofa (Pig).